The primary structure comprises 1320 residues: Myopalladin (1320 aa).

Positions 1-522 are interaction with CARP; it reads MQDDSIEAST…FTCTASNKYG (522 aa). Disordered regions lie at residues 19-68, 84-145, and 165-271; these read SYLA…AFLS, NYDP…SETQ, and FKSH…PPRF. Composition is skewed to basic and acidic residues over residues 23–35 and 87–106; these read ETRHRGNNERSRA and PLEKADETQARKRLSPDQMK. A Phosphoserine modification is found at Ser-101. Over residues 107–130 the composition is skewed to polar residues; the sequence is HSPNLSFEPNFCQDNPRSPTSSKE. Position 131 is a phosphoserine (Ser-131). Positions 168–182 are enriched in basic residues; sequence HSSKRIRPRACKNHK. Over residues 186–201 the composition is skewed to polar residues; sequence ESQNKVMQENSSSFSD. Basic and acidic residues predominate over residues 218-239; it reads DTRDNEVNHALEQQEAKRREAE. The stretch at 219–248 forms a coiled coil; sequence TRDNEVNHALEQQEAKRREAEQAASEAAGG. Over residues 240–258 the composition is skewed to low complexity; it reads QAASEAAGGDTTPGSSPSS. At Thr-251 the chain carries Phosphothreonine. Ig-like domains lie at 269–359 and 435–531; these read PRFT…IYIE and PVFT…AQLH. 2 disulfide bridges follow: Cys-290-Cys-341 and Cys-456-Cys-515. Positions 554-655 are disordered; the sequence is AAIEPQPSPP…VKEPPPVLAK (102 aa). The segment covering 559–575 has biased composition (pro residues); it reads QPSPPHSEPPSVEQPPK. At Ser-644 the chain carries Phosphoserine. The segment at 649–677 is interaction with NEB; it reads PPPVLAKPKLDSTQLQQLHNQVLLEQHQL. A Phosphoserine modification is found at Ser-759. The tract at residues 763–805 is disordered; sequence LLVSHPSVQTKSPGGLSIQNEPLPPGPTEPTPPPFTFSIPSGN. Polar residues predominate over residues 768–782; the sequence is PSVQTKSPGGLSIQN. Over residues 784-797 the composition is skewed to pro residues; sequence PLPPGPTEPTPPPF. Ser-813, Ser-818, Ser-867, Ser-907, and Ser-928 each carry phosphoserine. Residues 844–876 form a disordered region; the sequence is NAMGLPRSAPSMPSQGLAKKNTKSPQPVNDDNI. 3 Ig-like domains span residues 945–1029, 1073–1162, and 1172–1262; these read PIFD…GRIS, PHFL…LELS, and PVIL…ARLD. The interval 945 to 1320 is interaction with ACTN; sequence PIFDKRLKHF…SRSVVESDEL (376 aa). A disulfide bridge links Cys-1094 with Cys-1146.

It belongs to the myotilin/palladin family. As to quaternary structure, interacts with TTN/titin, NEB, NEBL, ACTN2 and CARP. As to expression, expressed in adult skeletal muscle and fetal heart.

The protein resides in the cytoplasm. It is found in the nucleus. It localises to the myofibril. Its subcellular location is the sarcomere. The protein localises to the z line. Functionally, component of the sarcomere that tethers together nebulin (skeletal muscle) and nebulette (cardiac muscle) to alpha-actinin, at the Z lines. The chain is Myopalladin (MYPN) from Homo sapiens (Human).